A 349-amino-acid polypeptide reads, in one-letter code: Sperm acrosomal protein FSA-ACR.1 (349 aa).

The N-terminal stretch at 1–8 (MKEVYLVG) is a signal peptide. A disordered region spans residues 1–265 (MKEVYLVGYA…EQPSGIPPSS (265 aa)). Over residues 63 to 114 (TSGEHTSVEHASAEHSSTEHTSGEHASGEHTSGERATGEHTSSEHATSEHTS) the composition is skewed to basic and acidic residues. Composition is skewed to polar residues over residues 117–142 (QPSG…SGEQ) and 154–171 (SGEQ…TSGE). Residues 178 to 189 (PSGEHAVAEKPS) show a composition bias toward basic and acidic residues. Residues 221–248 (EQASIEKASSEQASAEQASAEQASSEQA) show a composition bias toward low complexity. Asn342 is a glycosylation site (N-linked (GlcNAc...) asparagine).

The protein to acrosomal proteins SP-10. Testis.

It is found in the cytoplasmic vesicle. Its subcellular location is the secretory vesicle. The protein localises to the acrosome. This Vulpes vulpes (Red fox) protein is Sperm acrosomal protein FSA-ACR.1.